The following is a 190-amino-acid chain: Molybdenum cofactor guanylyltransferase (190 aa).

GTP-binding positions include 10-12, Lys-23, Asn-51, Asp-69, and Asp-99; that span reads LAG. Residue Asp-99 coordinates Mg(2+).

It belongs to the MobA family. Monomer. Requires Mg(2+) as cofactor.

Its subcellular location is the cytoplasm. It catalyses the reaction Mo-molybdopterin + GTP + H(+) = Mo-molybdopterin guanine dinucleotide + diphosphate. Functionally, transfers a GMP moiety from GTP to Mo-molybdopterin (Mo-MPT) cofactor (Moco or molybdenum cofactor) to form Mo-molybdopterin guanine dinucleotide (Mo-MGD) cofactor. The sequence is that of Molybdenum cofactor guanylyltransferase from Mannheimia succiniciproducens (strain KCTC 0769BP / MBEL55E).